The chain runs to 267 residues: Tryptophan synthase alpha chain (267 aa).

Active-site proton acceptor residues include Glu47 and Asp58.

It belongs to the TrpA family. Tetramer of two alpha and two beta chains.

It catalyses the reaction (1S,2R)-1-C-(indol-3-yl)glycerol 3-phosphate + L-serine = D-glyceraldehyde 3-phosphate + L-tryptophan + H2O. The protein operates within amino-acid biosynthesis; L-tryptophan biosynthesis; L-tryptophan from chorismate: step 5/5. Functionally, the alpha subunit is responsible for the aldol cleavage of indoleglycerol phosphate to indole and glyceraldehyde 3-phosphate. The chain is Tryptophan synthase alpha chain from Pelodictyon phaeoclathratiforme (strain DSM 5477 / BU-1).